Reading from the N-terminus, the 606-residue chain is MADPKGSTSKEGLGDWCILEADCSDLENDFEQLFEQDADSDVSDLLDNGELEQGNSLELFHQQECKQSEEQLQILKRKYLSPKAVAQLSPRLELMSLSPQQKSKRRLFAEQDSGLELSLNNEAEDNAPEVEVPALDSGPVDEGGTGDVDIDYLALLRSSNRKATLMAKFKDAFGVGFNELTRQFKSYKTCCNHRVLAVYAVHDDLFESSKQLLQQHCDYIWVRGIAAMTLYLLCFKAGKNRGTVHKLLTSMLNVQEQQILSEPPKLRNTAAALFWYKGGMGSGAFTYGKYPDWIAQQTVLGHQNAEASTFDFSVMVQWAFDNNHVDEADIAYQYARLAPEDSNAVAWLAHNSQAKFVRDCAAMVRFYKNLQMREMSMSEWIYTRINEVEGEGHWSSIVKFLGYQGVNFIMFLAALKNFLHAVPKQNCILIHGPPNSGKSSFAMSLIKVLKGRVLSFVNSRSQFWLQPLGECKIALIDDVTDPCWLYMDTYLRNGLDGHFVSLDCKYKAPVQTKFLPLLLTSNINVHEETNYRYLHSRIKGFEFPNPFPMKSDNTPQFELTDQSWKSFFERLWTQLELSDQEEEEEGEHGETQRAFQCSARSANEHI.

A Nuclear localization signal motif is present at residues 76-78 (KRK). A phosphoserine; by host mark is found at serine 81 and serine 89. A DNA-binding region region spans residues 144–307 (GTGDVDIDYL…TVLGHQNAEA (164 aa)). In terms of domain architecture, SF3 helicase spans 406–556 (VNFIMFLAAL…FPMKSDNTPQ (151 aa)). 432–439 (GPPNSGKS) serves as a coordination point for ATP. Lysine 513 is covalently cross-linked (Glycyl lysine isopeptide (Lys-Gly) (interchain with G-Cter in SUMO)). The tract at residues 581–606 (EEEEEGEHGETQRAFQCSARSANEHI) is disordered. Residues 593-606 (RAFQCSARSANEHI) show a composition bias toward polar residues.

The protein belongs to the papillomaviridae E1 protein family. As to quaternary structure, can form hexamers. Interacts with E2 protein; this interaction increases E1 DNA binding specificity. Interacts with host DNA polymerase subunit POLA2. Interacts with host single stranded DNA-binding protein RPA1. Interacts with host TOP1; this interaction stimulates the enzymatic activity of TOP1. In terms of processing, phosphorylated. Sumoylated.

Its subcellular location is the host nucleus. The enzyme catalyses Couples ATP hydrolysis with the unwinding of duplex DNA by translocating in the 3'-5' direction.. The catalysed reaction is ATP + H2O = ADP + phosphate + H(+). ATP-dependent DNA 3'-5' helicase required for initiation of viral DNA replication. It forms a complex with the viral E2 protein. The E1-E2 complex binds to the replication origin which contains binding sites for both proteins. During the initial step, a dimer of E1 interacts with a dimer of protein E2 leading to a complex that binds the viral origin of replication with high specificity. Then, a second dimer of E1 displaces the E2 dimer in an ATP-dependent manner to form the E1 tetramer. Following this, two E1 monomers are added to each half of the site, which results in the formation of two E1 trimers on the viral ori. Subsequently, two hexamers will be created. The double hexamer acts as a bi-directional helicase machinery and unwinds the viral DNA and then recruits the host DNA polymerase to start replication. The sequence is that of Replication protein E1 from Human papillomavirus type RTRX7.